Here is a 495-residue protein sequence, read N- to C-terminus: Ribose import ATP-binding protein RbsA (495 aa).

ABC transporter domains follow at residues 7–242 (LEMR…VGRP) and 250–491 (ERDI…TGVN). 39–46 (GENGAGKS) contacts ATP.

The protein belongs to the ABC transporter superfamily. Ribose importer (TC 3.A.1.2.1) family. The complex is composed of an ATP-binding protein (RbsA), two transmembrane proteins (RbsC) and a solute-binding protein (RbsB).

Its subcellular location is the cell inner membrane. It catalyses the reaction D-ribose(out) + ATP + H2O = D-ribose(in) + ADP + phosphate + H(+). In terms of biological role, part of the ABC transporter complex RbsABC involved in ribose import. Responsible for energy coupling to the transport system. The chain is Ribose import ATP-binding protein RbsA from Shigella dysenteriae serotype 1 (strain Sd197).